We begin with the raw amino-acid sequence, 43 residues long: MFSQIGAFLDSALLLLVAFFAVYRLVLVLCRWQRRQLDIPIHI.

A helical transmembrane segment spans residues 2-22 (FSQIGAFLDSALLLLVAFFAV).

This sequence belongs to the arteriviridae ORF5a protein family. Interacts with proteins GP2B and GP4.

It localises to the virion. The protein resides in the host cell membrane. In terms of biological role, minor virion component that plays an essential role in virus infectivity. This chain is Structural protein ORF5a, found in Sus scrofa (Pig).